A 295-amino-acid polypeptide reads, in one-letter code: 15-cis-phytoene synthase (295 aa).

This sequence belongs to the phytoene/squalene synthase family. ATP serves as cofactor. The cofactor is Mn(2+).

The catalysed reaction is 2 (2E,6E,10E)-geranylgeranyl diphosphate = 15-cis-phytoene + 2 diphosphate. It participates in carotenoid biosynthesis; phytoene biosynthesis. With respect to regulation, significant inhibition is seen at GGPP concentrations above 100 uM. Functionally, involved in the biosynthesis of carotenoids. Catalyzes stereoselectively the condensation of two molecules of geranylgeranyl diphosphate (GGPP) to give prephytoene diphosphate (PPPP) and the subsequent rearrangement of the cyclopropylcarbinyl intermediate to yield 15-cis-phytoene. The chain is 15-cis-phytoene synthase (crtB) from Enterobacter agglomerans (Erwinia herbicola).